The following is a 407-amino-acid chain: Putative F-box protein At2g16220 (407 aa).

One can recognise an F-box domain in the interval 1 to 45; that stretch reads MNSHFLTNDLILEVLSRLPLKSVARFHCVSKRWASMFGSPYFKEL. The interval 385-407 is disordered; that stretch reads PPSVQPEYDESDSESEEDREIII. Over residues 391–407 the composition is skewed to acidic residues; that stretch reads EYDESDSESEEDREIII.

This chain is Putative F-box protein At2g16220, found in Arabidopsis thaliana (Mouse-ear cress).